Consider the following 197-residue polypeptide: KSYFLGGAGERGLTIEGNFIKFTAIGVYLEDIAVASLAAKWKGKSSEELLETLDFYRDIISGPFEKLIRGSKIRELSGPEYSRKVMENCVAHLKSVGTYGDAEAEAMQKFAEAFKPVNFPPGASVFYRQSPDGILGLSFSPDTSIPEKEAALIENKAVSSAVLETMIGEHAVSPDLKRCLAARLPALLNEGAFKIGN.

Substrate is bound by residues T23, N88, and T165.

This sequence belongs to the chalcone isomerase family.

The catalysed reaction is a chalcone = a flavanone.. The protein operates within secondary metabolite biosynthesis; flavonoid biosynthesis. Functionally, catalyzes the intramolecular cyclization of bicyclic chalcones into tricyclic (S)-flavanones. Responsible for the isomerization of 4,2',4',6'-tetrahydroxychalcone (also termed chalcone) into naringenin. The polypeptide is Chalcone--flavanone isomerase 2 (CHI2) (Medicago sativa (Alfalfa)).